Here is a 438-residue protein sequence, read N- to C-terminus: (3,5-dihydroxyphenyl)acetyl-CoA 1,2-dioxygenase (438 aa).

Residues Asp183, Glu189, 222–225 (HPRY), 233–238 (AGINLK), Gly296, 325–327 (IPG), and Gln416 each bind substrate.

Belongs to the enoyl-CoA hydratase/isomerase family. As to quaternary structure, homohexamer; dimer of trimers.

The enzyme catalyses (3,5-dihydroxyphenyl)acetyl-CoA + O2 = 2-(3,5-dihydroxyphenyl)-2-oxoacetate + CoA + H(+). Its activity is regulated as follows. Inhibited by DPA-S-(N-acetylcysteamine). Functionally, involved in the biosynthesis of the nonproteinogenic amino acid monomer (S)-3,5-dihydroxyphenylglycine (Dpg) responsible of the production of vancomycin and teicoplanin antibiotics. Catalyzes the unusual conversion 3,5-dihydroxyphenylacetyl-CoA (DPA-CoA) to 3,5-dihydroxyphenylglyoxylate. DpgC performed a net four-electron oxidation of the benzylic carbon of DPA-CoA and the hydrolysis of the thioester bond to generate free CoA. DpgC has the ability to process a diverse range of substituted phenylacetyl-CoA substrates. The sequence is that of (3,5-dihydroxyphenyl)acetyl-CoA 1,2-dioxygenase from Streptomyces toyocaensis.